We begin with the raw amino-acid sequence, 256 residues long: 5-keto-4-deoxy-D-glucarate aldolase (256 aa).

His50 functions as the Proton acceptor in the catalytic mechanism. Gln151 serves as a coordination point for substrate. Glu153 provides a ligand contact to Mg(2+). Substrate contacts are provided by Ser178 and Asp179. Asp179 serves as a coordination point for Mg(2+).

The protein belongs to the HpcH/HpaI aldolase family. KDGluc aldolase subfamily. In terms of assembly, homohexamer; trimer of dimers. It depends on Mg(2+) as a cofactor.

The catalysed reaction is 5-dehydro-4-deoxy-D-glucarate = 2-hydroxy-3-oxopropanoate + pyruvate. It catalyses the reaction 2-dehydro-3-deoxy-D-glucarate = 2-hydroxy-3-oxopropanoate + pyruvate. It participates in carbohydrate acid metabolism; galactarate degradation; D-glycerate from galactarate: step 2/3. Catalyzes the reversible retro-aldol cleavage of both 5-keto-4-deoxy-D-glucarate and 2-keto-3-deoxy-D-glucarate to pyruvate and tartronic semialdehyde. The protein is 5-keto-4-deoxy-D-glucarate aldolase of Escherichia coli O6:H1 (strain CFT073 / ATCC 700928 / UPEC).